Consider the following 540-residue polypeptide: Collagen alpha-1(XXIII) chain (540 aa).

The segment covering 1 to 26 (MGPGERAGGGGDAGKGNAAGGGGGGR) has biased composition (gly residues). The interval 1 to 28 (MGPGERAGGGGDAGKGNAAGGGGGGRSA) is disordered. Residues 1–34 (MGPGERAGGGGDAGKGNAAGGGGGGRSATTAGSR) lie on the Cytoplasmic side of the membrane. The helical; Signal-anchor for type II membrane protein transmembrane segment at 35-56 (AVSALCLLLSVGSAAACLLLGV) threads the bilayer. Topologically, residues 57–540 (QAAALQGRVA…GLPVPGCWHK (484 aa)) are extracellular. Disordered regions lie at residues 109–304 (AREA…GEQG) and 316–540 (LDAL…CWHK). Collagen-like domains are found at residues 124-243 (GRRG…PGKK), 251-305 (QPGP…EQGD), 321-380 (GPPG…MGLS), 412-460 (GPPG…GPPG), and 463-522 (GLPG…PGLD). Low complexity-rich tracts occupy residues 140 to 156 (QSGR…DGKP) and 168 to 183 (PGDF…DGAA). Positions 185-195 (PPGPPGPPGAR) are enriched in pro residues. A compositionally biased stretch (pro residues) spans 322 to 334 (PPGPQGPPGPPGI). The segment covering 350-362 (DGEKGPKGQKGDP) has biased composition (basic and acidic residues). Positions 411-422 (PGPPGPPGPPGP) are enriched in pro residues. 2 stretches are compositionally biased toward basic and acidic residues: residues 435-444 (DGAKGEKGAS) and 486-503 (RGEK…ERGV).

As to quaternary structure, homotrimer. In terms of processing, undergoes proteolytic cleavage by furin protease to yield a 60 kDa soluble form that forms a homotrimer and exhibits a low affinity interaction with heparin.

It localises to the cell membrane. The polypeptide is Collagen alpha-1(XXIII) chain (COL23A1) (Homo sapiens (Human)).